We begin with the raw amino-acid sequence, 434 residues long: UDP-N-acetylglucosamine 1-carboxyvinyltransferase (434 aa).

22–23 (KN) contacts phosphoenolpyruvate. A UDP-N-acetyl-alpha-D-glucosamine-binding site is contributed by Arg97. Catalysis depends on Asp121, which acts as the Proton donor. The UDP-N-acetyl-alpha-D-glucosamine site is built by Asp319 and Met341.

This sequence belongs to the EPSP synthase family. MurA subfamily.

Its subcellular location is the cytoplasm. The enzyme catalyses phosphoenolpyruvate + UDP-N-acetyl-alpha-D-glucosamine = UDP-N-acetyl-3-O-(1-carboxyvinyl)-alpha-D-glucosamine + phosphate. The protein operates within cell wall biogenesis; peptidoglycan biosynthesis. Cell wall formation. Adds enolpyruvyl to UDP-N-acetylglucosamine. The polypeptide is UDP-N-acetylglucosamine 1-carboxyvinyltransferase (Porphyromonas gingivalis (strain ATCC BAA-308 / W83)).